Reading from the N-terminus, the 336-residue chain is uncharacterized protein (336 aa).

This sequence to bacterial alkanal monooxygenase alpha and beta chains.

This is an uncharacterized protein from Bacillus subtilis (strain 168).